Here is a 229-residue protein sequence, read N- to C-terminus: Putative ankyrin repeat protein L148 (229 aa).

4 ANK repeats span residues 70-95 (ILDY…PDNY), 96-126 (IGTE…DLRI), 127-156 (NNDY…NCQA), and 157-186 (YNNA…SVAA).

In Acanthamoeba polyphaga (Amoeba), this protein is Putative ankyrin repeat protein L148.